The following is a 260-amino-acid chain: Proteasome subunit alpha type-1 (260 aa).

The tract at residues 240 to 260 is disordered; the sequence is PRTTGGAAAAAAPGGAEPMQM. A compositionally biased stretch (low complexity) spans 244-260; the sequence is GGAAAAAAPGGAEPMQM.

Belongs to the peptidase T1A family. As to quaternary structure, the 26S proteasome consists of a 20S proteasome core and two 19S regulatory subunits. The 20S proteasome core is composed of 28 subunits that are arranged in four stacked rings, resulting in a barrel-shaped structure. The two end rings are each formed by seven alpha subunits, and the two central rings are each formed by seven beta subunits. The catalytic chamber with the active sites is on the inside of the barrel.

It localises to the cytoplasm. Its subcellular location is the nucleus. Functionally, the proteasome is a multicatalytic proteinase complex which is characterized by its ability to cleave peptides with Arg, Phe, Tyr, Leu, and Glu adjacent to the leaving group at neutral or slightly basic pH. The proteasome has an ATP-dependent proteolytic activity. The protein is Proteasome subunit alpha type-1 (pas-6) of Caenorhabditis elegans.